A 541-amino-acid chain; its full sequence is EH domain-containing protein 4 (541 aa).

Met1 bears the N-acetylmethionine mark. A Dynamin-type G domain is found at 58–289 (FENKPMILLV…DLFRDIQSLP (232 aa)). Residues 68–75 (GQYSTGKT) form a G1 motif region. 68 to 75 (GQYSTGKT) serves as a coordination point for ATP. The interval 94-95 (EP) is G2 motif. The interval 156-159 (DSPG) is G3 motif. Ser162 is subject to Phosphoserine. Residues 222-225 (NKAD) form a G4 motif region. Lys223 contacts ATP. Position 246 (Val246) is a region of interest, G5 motif. Trp261 serves as a coordination point for ATP. Positions 447–535 (DKPVYDELFY…PHLVPPSHRK (89 aa)) constitute an EH domain. Residue Tyr451 is modified to Phosphotyrosine. Ser459 carries the post-translational modification Phosphoserine. Residues 479–514 (LPNSVLGKIWKLADCDCDGMLDEEEFALAKHLIKIK) form the EF-hand domain. Residues Asp492, Asp494, Asp496, Met498, and Glu503 each coordinate Ca(2+).

The protein belongs to the TRAFAC class dynamin-like GTPase superfamily. Dynamin/Fzo/YdjA family. EHD subfamily. As to quaternary structure, homooligomer, and heterooligomer with EHD1, EHD2 and EHD3. Forms a complex with EHD4 and MICALL1; the complex controls CDH5 trafficking and coordinates angiogenesis. As to expression, highly expressed in pancreas and heart.

It is found in the early endosome membrane. The protein resides in the recycling endosome membrane. The protein localises to the cell membrane. Its subcellular location is the cell junction. It localises to the adherens junction. Its function is as follows. ATP- and membrane-binding protein that probably controls membrane reorganization/tubulation upon ATP hydrolysis. Plays a role in early endosomal transport. During sprouting angiogenesis, in complex with PACSIN2 and MICALL1, forms recycling endosome-like tubular structure at asymmetric adherens junctions to control CDH5 trafficking. The sequence is that of EH domain-containing protein 4 from Homo sapiens (Human).